The sequence spans 349 residues: ATPase GET3 (349 aa).

26-33 is an ATP binding site; it reads KGGVGKTT. The active site involves Asp-57. Glu-242 and Asn-269 together coordinate ATP. Zn(2+) contacts are provided by Cys-281 and Cys-284.

Belongs to the arsA ATPase family. In terms of assembly, homodimer. Component of the Golgi to ER traffic (GET) complex, which is composed of GET1, GET2 and GET3. Within the complex, GET1 and GET2 form a heterotetramer which is stabilized by phosphatidylinositol binding and which binds to the GET3 homodimer. Interacts with the chloride channel protein GEF1.

It is found in the cytoplasm. It localises to the endoplasmic reticulum. The protein localises to the golgi apparatus. Functionally, ATPase required for the post-translational delivery of tail-anchored (TA) proteins to the endoplasmic reticulum. Recognizes and selectively binds the transmembrane domain of TA proteins in the cytosol. This complex then targets to the endoplasmic reticulum by membrane-bound receptors GET1 and GET2, where the tail-anchored protein is released for insertion. This process is regulated by ATP binding and hydrolysis. ATP binding drives the homodimer towards the closed dimer state, facilitating recognition of newly synthesized TA membrane proteins. ATP hydrolysis is required for insertion. Subsequently, the homodimer reverts towards the open dimer state, lowering its affinity for the GET1-GET2 receptor, and returning it to the cytosol to initiate a new round of targeting. Cooperates with the HDEL receptor ERD2 to mediate the ATP-dependent retrieval of resident ER proteins that contain a C-terminal H-D-E-L retention signal from the Golgi to the ER. Involved in low-level resistance to the oxyanions arsenite and arsenate, and in heat tolerance. In Lodderomyces elongisporus (strain ATCC 11503 / CBS 2605 / JCM 1781 / NBRC 1676 / NRRL YB-4239) (Yeast), this protein is ATPase GET3.